Here is a 114-residue protein sequence, read N- to C-terminus: uncharacterized protein (114 aa).

This sequence to M.jannaschii MJ0310 and MJ0714.

This is an uncharacterized protein from Methanocaldococcus jannaschii (strain ATCC 43067 / DSM 2661 / JAL-1 / JCM 10045 / NBRC 100440) (Methanococcus jannaschii).